The sequence spans 98 residues: ESAT-6-like protein EsxW (98 aa).

This sequence belongs to the WXG100 family. CFP-10 subfamily. As to quaternary structure, forms a tight 1:1 complex with EsxV. The complex is destabilized at low pH. Unfolding of the proteins is required for dissociation of the complex and membrane binding.

It is found in the secreted. In Mycobacterium tuberculosis (strain ATCC 25618 / H37Rv), this protein is ESAT-6-like protein EsxW.